Consider the following 382-residue polypeptide: Mating-type protein a-1 (382 aa).

The segment at residues Ile116–Arg184 is a DNA-binding region (HMG box).

In terms of assembly, binds in vitro to DNA containing a specific core sequence 5'-CTTTG-3'.

The protein resides in the nucleus. Its function is as follows. Mating type proteins are sequence specific DNA-binding proteins that act as master switches in yeast differentiation by controlling gene expression in a cell type-specific fashion. Transcriptional activator that induces the transcription of a-specific genes like mating factor mfa-1. Required for mating as an a-cell, blocking of heterokaryon formation (vegetative incompatibility) and for perithecium induction. The chain is Mating-type protein a-1 (mta-1) from Neurospora crassa.